Reading from the N-terminus, the 451-residue chain is tRNA-2-methylthio-N(6)-dimethylallyladenosine synthase (451 aa).

An MTTase N-terminal domain is found at 3–120 (KKLFIQTHGC…LPEMVNAAGK (118 aa)). Residues C12, C49, C83, C156, C160, and C163 each coordinate [4Fe-4S] cluster. The region spanning 142–374 (RVEGAEAFVS…QRRISQQAYD (233 aa)) is the Radical SAM core domain. In terms of domain architecture, TRAM spans 377–441 (LSMVGEVQRI…PNSLLGELVG (65 aa)).

Belongs to the methylthiotransferase family. MiaB subfamily. As to quaternary structure, monomer. [4Fe-4S] cluster is required as a cofactor.

The protein resides in the cytoplasm. The enzyme catalyses N(6)-dimethylallyladenosine(37) in tRNA + (sulfur carrier)-SH + AH2 + 2 S-adenosyl-L-methionine = 2-methylsulfanyl-N(6)-dimethylallyladenosine(37) in tRNA + (sulfur carrier)-H + 5'-deoxyadenosine + L-methionine + A + S-adenosyl-L-homocysteine + 2 H(+). In terms of biological role, catalyzes the methylthiolation of N6-(dimethylallyl)adenosine (i(6)A), leading to the formation of 2-methylthio-N6-(dimethylallyl)adenosine (ms(2)i(6)A) at position 37 in tRNAs that read codons beginning with uridine. The protein is tRNA-2-methylthio-N(6)-dimethylallyladenosine synthase of Marinomonas sp. (strain MWYL1).